The sequence spans 283 residues: NADPH-dependent 3-dehydrocapnine reductase (283 aa).

The Proton acceptor role is filled by Tyr153.

This sequence belongs to the short-chain dehydrogenases/reductases (SDR) family.

The enzyme catalyses 3-oxocapnine + NADPH + H(+) = capnine + NADP(+). It participates in lipid metabolism. In terms of biological role, reductase involved in the biosynthesis of capnine, a sulfonolipid present in the outer membrane of gliding Bacteroidetes and essential for gliding motility. Catalyzes the reduction of 3-dehydrocapnine to capnine. The sequence is that of NADPH-dependent 3-dehydrocapnine reductase from Ornithobacterium rhinotracheale.